Consider the following 286-residue polypeptide: Polyamine aminopropyltransferase (286 aa).

The PABS domain maps to 5 to 238 (TMWHETLHDQ…GIMTFAWATD (234 aa)). Q33 is a binding site for S-methyl-5'-thioadenosine. Positions 64 and 88 each coordinate spermidine. S-methyl-5'-thioadenosine-binding positions include E108 and 140–141 (DG). The Proton acceptor role is filled by D158. 158 to 161 (DCTD) lines the spermidine pocket. P165 serves as a coordination point for S-methyl-5'-thioadenosine.

The protein belongs to the spermidine/spermine synthase family. As to quaternary structure, homodimer or homotetramer.

It is found in the cytoplasm. The catalysed reaction is S-adenosyl 3-(methylsulfanyl)propylamine + putrescine = S-methyl-5'-thioadenosine + spermidine + H(+). The protein operates within amine and polyamine biosynthesis; spermidine biosynthesis; spermidine from putrescine: step 1/1. In terms of biological role, catalyzes the irreversible transfer of a propylamine group from the amino donor S-adenosylmethioninamine (decarboxy-AdoMet) to putrescine (1,4-diaminobutane) to yield spermidine. In Salmonella newport (strain SL254), this protein is Polyamine aminopropyltransferase.